A 150-amino-acid polypeptide reads, in one-letter code: UPF0735 ACT domain-containing protein Csac_0995 (150 aa).

Residues Thr72–Arg147 form the ACT domain.

It belongs to the UPF0735 family.

This chain is UPF0735 ACT domain-containing protein Csac_0995, found in Caldicellulosiruptor saccharolyticus (strain ATCC 43494 / DSM 8903 / Tp8T 6331).